We begin with the raw amino-acid sequence, 272 residues long: Ribonuclease HII (272 aa).

In terms of domain architecture, RNase H type-2 spans 87–272 (KYVAGVDEVG…HRMSFLKNIL (186 aa)). Residues Asp-93, Glu-94, and Asp-188 each coordinate a divalent metal cation.

The protein belongs to the RNase HII family. Requires Mn(2+) as cofactor. Mg(2+) serves as cofactor.

It localises to the cytoplasm. The catalysed reaction is Endonucleolytic cleavage to 5'-phosphomonoester.. In terms of biological role, endonuclease that specifically degrades the RNA of RNA-DNA hybrids. The sequence is that of Ribonuclease HII from Clostridium perfringens (strain ATCC 13124 / DSM 756 / JCM 1290 / NCIMB 6125 / NCTC 8237 / Type A).